The primary structure comprises 534 residues: Solute carrier family 22 member 15 (534 aa).

Residues 22–42 (FLLAVLLQLYSATEAIIITIL) form a helical membrane-spanning segment. 3 N-linked (GlcNAc...) asparagine glycosylation sites follow: Asn52, Asn58, and Asn83. 11 consecutive transmembrane segments (helical) span residues 97-117 (AAYE…IGVI), 136-156 (LALE…PLFL), 161-181 (LVGV…NECI), 191-211 (SLGS…GYFI), 216-236 (LLAL…LCIP), 297-317 (TLIM…LTLS), 327-347 (LNLA…MYLI), 356-376 (GSLA…MLVP), 391-411 (TLSL…YIYS), 424-444 (MGVC…IPAL), and 450-470 (ALPF…SLLL). A glycan (N-linked (GlcNAc...) asparagine) is linked at Asn513.

The protein belongs to the major facilitator (TC 2.A.1) superfamily. Organic cation transporter (TC 2.A.1.19) family.

It is found in the membrane. Probably transports organic cations. The protein is Solute carrier family 22 member 15 (slc22a15) of Xenopus tropicalis (Western clawed frog).